Here is a 2610-residue protein sequence, read N- to C-terminus: E3 ubiquitin-protein ligase HECTD1 (2610 aa).

A disordered region spans residues 246–269 (TVSGPSSACKPGRSTTGAPSTTAD). Over residues 258–269 (RSTTGAPSTTAD) the composition is skewed to polar residues. 4 ANK repeats span residues 395–424 (VGQT…DVNR), 426–455 (QRSS…NPDL), 459–491 (DGKT…PVNK), and 579–612 (ITAT…DIFL). The tract at residues 489 to 513 (VNKGDDKKKKDTNKDEEECNEPKGD) is disordered. Over residues 491-501 (KGDDKKKKDTN) the composition is skewed to basic and acidic residues. Disordered regions lie at residues 627 to 657 (LAGP…ELQQ) and 707 to 748 (SSGS…LSAP). Ser631 and Ser640 each carry phosphoserine. Basic and acidic residues predominate over residues 639 to 657 (ESKPEKEDEPQEDAKELQQ). Positions 707–717 (SSGSPEGGSDS) are enriched in low complexity. The span at 718 to 729 (SESRSEFLEKLQ) shows a compositional bias: basic and acidic residues. The MIB/HERC2 domain occupies 1266-1338 (VRSQVLKYMV…KFDLKLAPGY (73 aa)). Disordered stretches follow at residues 1343-1406 (VASP…KTER) and 1433-1483 (ENVP…SMGI). The span at 1348–1365 (PVSSTVSGTTQSWSSLVK) shows a compositional bias: polar residues. Composition is skewed to low complexity over residues 1373 to 1395 (SAAA…ASSS) and 1441 to 1458 (GSSS…TGSE). Phosphoserine is present on Ser1384. Residues 1469-1479 (SVRTPGESSAI) show a composition bias toward polar residues. Position 1488 is a phosphoserine (Ser1488). The tract at residues 1496-1515 (ELTNKEAASQRPLSSSASNR) is disordered. Ser1567 is modified (phosphoserine). Disordered regions lie at residues 1592 to 1611 (GAQS…VTMS) and 1674 to 1757 (ELDD…KGGR). Over residues 1600–1611 (TTPGTTSTVTMS) the composition is skewed to low complexity. The span at 1674 to 1703 (ELDDDEDLPEPDEEDDENEDDNQEDQEYEE) shows a compositional bias: acidic residues. At Thr1760 the chain carries Phosphothreonine. The residue at position 1772 (Ser1772) is a Phosphoserine. Positions 1777-1797 (AFDPRPGRTNVQQTTDLEIPP) are disordered. Positions 2029–2103 (FTFPPDEFTS…AIVWLQNRRE (75 aa)) are K-box. Residues 2151–2610 (IHADRKSVLE…ATMEKGFHLN (460 aa)) form the HECT domain. Residues 2297-2318 (HCTESQSEASTEEGHDSLSVGS) are disordered. Ser2318 bears the Phosphoserine mark. Cys2579 functions as the Glycyl thioester intermediate in the catalytic mechanism.

Belongs to the UPL family. K-HECT subfamily. As to quaternary structure, interacts with IGSF1.

The catalysed reaction is S-ubiquitinyl-[E2 ubiquitin-conjugating enzyme]-L-cysteine + [acceptor protein]-L-lysine = [E2 ubiquitin-conjugating enzyme]-L-cysteine + N(6)-ubiquitinyl-[acceptor protein]-L-lysine.. It functions in the pathway protein modification; protein ubiquitination. In terms of biological role, E3 ubiquitin-protein ligase which accepts ubiquitin from an E2 ubiquitin-conjugating enzyme in the form of a thioester and then directly transfers the ubiquitin to targeted substrates. Mediates 'Lys-63'-linked polyubiquitination of HSP90AA1 which leads to its intracellular localization and reduced secretion. Negatively regulating HSP90AA1 secretion in cranial mesenchyme cells may impair their emigration and may be essential for the correct development of the cranial neural folds and neural tube closure. Catalyzes ubiquitination and degradation of ZNF622, an assembly factor for the ribosomal 60S subunit, in hematopoietic cells, thereby promoting hematopoietic stem cell renewal. In Homo sapiens (Human), this protein is E3 ubiquitin-protein ligase HECTD1.